A 221-amino-acid polypeptide reads, in one-letter code: Glutathione S-transferase A3 (221 aa).

Ala2 carries the post-translational modification N-acetylalanine. The GST N-terminal domain maps to 3-83 (GKPVLHYFDG…YIASKYNLYG (81 aa)). Lys4 bears the N6-succinyllysine mark. Glutathione is bound by residues Tyr9, Arg45, 54 to 55 (QV), and 67 to 68 (QT). One can recognise a GST C-terminal domain in the interval 85–207 (DMKERAIIDM…LQPGSQRKPF (123 aa)).

Homodimer.

The protein localises to the cytoplasm. The enzyme catalyses RX + glutathione = an S-substituted glutathione + a halide anion + H(+). It carries out the reaction androst-5-ene-3,17-dione = androst-4-ene-3,17-dione. It catalyses the reaction pregn-5-ene-3,20-dione = progesterone. Its function is as follows. Conjugation of reduced glutathione to a wide number of exogenous and endogenous hydrophobic electrophiles. Catalyzes isomerization reactions that contribute to the biosynthesis of steroid hormones. Efficiently catalyze obligatory double-bond isomerizations of delta(5)-androstene-3,17-dione and delta(5)-pregnene-3,20-dione, precursors to testosterone and progesterone, respectively. Has a high catalytic activity for aflatoxin B1-8,9 epoxide. This is Glutathione S-transferase A3 from Mus musculus (Mouse).